A 189-amino-acid polypeptide reads, in one-letter code: H/ACA ribonucleoprotein complex subunit 1-like protein 2 (189 aa).

The segment covering 1 to 12 (MRPPRGGGSFRG) has biased composition (gly residues). Disordered regions lie at residues 1 to 39 (MRPP…NYDE) and 129 to 189 (RFLP…RGRA). Residues 162-177 (GRGAPRGASRGFQPRG) are compositionally biased toward low complexity.

It belongs to the GAR1 family. Component of the small nucleolar ribonucleoprotein particle containing H/ACA-type snoRNAs (H/ACA snoRNPs).

The protein resides in the nucleus. It localises to the nucleolus. Required for ribosome biogenesis. Part of a complex which catalyzes pseudouridylation of rRNA. This involves the isomerization of uridine such that the ribose is subsequently attached to C5, instead of the normal N1. Pseudouridine ('psi') residues may serve to stabilize the conformation of rRNAs. In Arabidopsis thaliana (Mouse-ear cress), this protein is H/ACA ribonucleoprotein complex subunit 1-like protein 2.